The sequence spans 384 residues: MPNASRVVIVAGEESGDHHAAELVKQLKAVYPDLEISGIGGKHLRAAGVHLISDLTRYAVTGLTEIIPFLKIFRKAFQDIKQHLSTQKPDLLILVDYPAFNLRLAKYAKKKLGIKIIYYISPQIWAWKGKRIHLIKDCIDKMAVIFPFEKTIYENAGVPVSFVGHPLVKKIAAAKDKHSGRTSLGLPLNEPIIALLPGSRHSEIERHIPILVNTAKLLTLDNPKLRFVVPIAGTINPDKVKAYFSNQNLTVTFIQGQAIECMSAADFVIVASGTASLECALLEKPMCIIYKSSFLTYVAAMYFIKVKFLGLCNLLANKMMVPEFLQYDCNAIELSRYISNFHNDPNQAKSMINQLAKLKESLSSSQADCSLFDLVVAELPEKNA.

Belongs to the LpxB family.

The catalysed reaction is a lipid X + a UDP-2-N,3-O-bis[(3R)-3-hydroxyacyl]-alpha-D-glucosamine = a lipid A disaccharide + UDP + H(+). Its pathway is bacterial outer membrane biogenesis; LPS lipid A biosynthesis. Functionally, condensation of UDP-2,3-diacylglucosamine and 2,3-diacylglucosamine-1-phosphate to form lipid A disaccharide, a precursor of lipid A, a phosphorylated glycolipid that anchors the lipopolysaccharide to the outer membrane of the cell. The chain is Lipid-A-disaccharide synthase 1 from Legionella pneumophila subsp. pneumophila (strain Philadelphia 1 / ATCC 33152 / DSM 7513).